The chain runs to 117 residues: Large ribosomal subunit protein bL20c (117 aa).

The protein belongs to the bacterial ribosomal protein bL20 family.

The protein localises to the plastid. Its subcellular location is the chloroplast. Its function is as follows. Binds directly to 23S ribosomal RNA and is necessary for the in vitro assembly process of the 50S ribosomal subunit. It is not involved in the protein synthesizing functions of that subunit. The protein is Large ribosomal subunit protein bL20c of Vitis vinifera (Grape).